The following is a 144-amino-acid chain: Putative HTH-type transcriptional regulator aq_268 (144 aa).

Residues I2–N133 form the HTH rrf2-type domain.

The polypeptide is Putative HTH-type transcriptional regulator aq_268 (Aquifex aeolicus (strain VF5)).